The primary structure comprises 739 residues: Phosphoribosylformylglycinamidine synthase subunit PurL (739 aa).

Residue H54 is part of the active site. 2 residues coordinate ATP: Y57 and K96. Position 98 (E98) interacts with Mg(2+). Residues S99–H102 and R121 each bind substrate. The Proton acceptor role is filled by H100. Position 122 (D122) interacts with Mg(2+). A substrate-binding site is contributed by Q245. D273 lines the Mg(2+) pocket. Residue E317–Q319 participates in substrate binding. Residues D500 and G537 each contribute to the ATP site. N538 is a Mg(2+) binding site. Position 540 (S540) interacts with substrate.

Belongs to the FGAMS family. Monomer. Part of the FGAM synthase complex composed of 1 PurL, 1 PurQ and 2 PurS subunits.

It is found in the cytoplasm. The enzyme catalyses N(2)-formyl-N(1)-(5-phospho-beta-D-ribosyl)glycinamide + L-glutamine + ATP + H2O = 2-formamido-N(1)-(5-O-phospho-beta-D-ribosyl)acetamidine + L-glutamate + ADP + phosphate + H(+). It functions in the pathway purine metabolism; IMP biosynthesis via de novo pathway; 5-amino-1-(5-phospho-D-ribosyl)imidazole from N(2)-formyl-N(1)-(5-phospho-D-ribosyl)glycinamide: step 1/2. In terms of biological role, part of the phosphoribosylformylglycinamidine synthase complex involved in the purines biosynthetic pathway. Catalyzes the ATP-dependent conversion of formylglycinamide ribonucleotide (FGAR) and glutamine to yield formylglycinamidine ribonucleotide (FGAM) and glutamate. The FGAM synthase complex is composed of three subunits. PurQ produces an ammonia molecule by converting glutamine to glutamate. PurL transfers the ammonia molecule to FGAR to form FGAM in an ATP-dependent manner. PurS interacts with PurQ and PurL and is thought to assist in the transfer of the ammonia molecule from PurQ to PurL. The chain is Phosphoribosylformylglycinamidine synthase subunit PurL from Bacillus cereus (strain ATCC 10987 / NRS 248).